The following is a 279-amino-acid chain: Probable endonuclease 4 (279 aa).

Positions 74, 112, 147, 180, 183, 214, 227, 229, and 259 each coordinate Zn(2+).

This sequence belongs to the AP endonuclease 2 family. It depends on Zn(2+) as a cofactor.

The catalysed reaction is Endonucleolytic cleavage to 5'-phosphooligonucleotide end-products.. Its function is as follows. Endonuclease IV plays a role in DNA repair. It cleaves phosphodiester bonds at apurinic or apyrimidinic (AP) sites, generating a 3'-hydroxyl group and a 5'-terminal sugar phosphate. This chain is Probable endonuclease 4, found in Mycoplasma mobile (strain ATCC 43663 / 163K / NCTC 11711) (Mesomycoplasma mobile).